We begin with the raw amino-acid sequence, 427 residues long: Riboflavin transporter rft-1 (427 aa).

Topologically, residues 1-2 (MK) are cytoplasmic. The chain crosses the membrane as a helical span at residues 3 to 23 (TFLFTFCLVAIFGSSSWIGTN). At 24–42 (SVWMELSLLTAKLPEGWNL) the chain is on the extracellular side. Residues 43–63 (PSYLSAIVQIACLGPLIYSII) traverse the membrane as a helical segment. The Cytoplasmic portion of the chain corresponds to 64–73 (HKGIKMTIPT). A helical membrane pass occupies residues 74-94 (VPLIFIFMVLACICQLGLCFF). Topologically, residues 95–111 (WDDTGYIFGAIRSWPLY) are extracellular. A helical membrane pass occupies residues 112–132 (LLLFGLAIVDAISSVLFLPFM). Topologically, residues 133–139 (AQFHPSF) are cytoplasmic. Residues 140 to 160 (LNAYFVGMGLSALIPSLLSLI) form a helical membrane-spanning segment. Topologically, residues 161–184 (QGTSNYWCDDNKTPHYYPPRFSVS) are extracellular. The helical transmembrane segment at 185–205 (MFFLINFFFTCAAVAAFLVLY) threads the bilayer. Topologically, residues 206–261 (KIGAHKNSSQVEPEPKHSIQIIQGDSTTDVNEVNTESSFQETSSIPDSSSATGARL) are cytoplasmic. A helical membrane pass occupies residues 262–282 (AFLLLTTALVNAQMNGIVTSV). Residues 283 to 297 (QSYATLVYSQNTYHY) are Extracellular-facing. Residues 298 to 318 (AVTLSNVISPLASYLQFFVKI) form a helical membrane-spanning segment. Residues 319 to 322 (RSLP) are Cytoplasmic-facing. A helical transmembrane segment spans residues 323-343 (ILAFLTLCSSLTTAVIIYLAA). Residues 344–353 (LSPNWIFNSE) are Extracellular-facing. A helical membrane pass occupies residues 354-374 (TAGTIISIASSLIAAGLHSYL). At 375-391 (RVMFAALLREGNQKESR) the chain is on the cytoplasmic side. The chain crosses the membrane as a helical span at residues 392–412 (LFWCGAFIQIGSFTGSAIMFP). The Extracellular segment spans residues 413–427 (LVNVWKLFHSAPSCR).

The protein belongs to the riboflavin transporter family. As to expression, expressed in intestine.

The protein resides in the cell membrane. It carries out the reaction riboflavin(in) = riboflavin(out). Its activity is regulated as follows. Activity is strongly inhibited by riboflavin analogs, such as lumiflavin and lumichrome. Riboflavin transporter. Riboflavin transport is Na(+)-independent but pH-sensitive. In Caenorhabditis elegans, this protein is Riboflavin transporter rft-1.